The chain runs to 1091 residues: Sodium/potassium exporting P-type ATPase 1 (1091 aa).

The Cytoplasmic segment spans residues 1-63 (MGEGTTKENN…LGDDTKIDYK (63 aa)). A helical membrane pass occupies residues 64–84 (AMVLHQVCNAMIMVLLISMII). Residues 85-90 (SFAMHD) lie on the Extracellular side of the membrane. Residues 91–111 (WITGGVISFVIAVNVLIGLVQ) form a helical membrane-spanning segment. Topologically, residues 112–282 (EYKATKTMNS…TNVGTPLHRK (171 aa)) are cytoplasmic. The chain crosses the membrane as a helical span at residues 283-303 (LSKLAVLLFWIAVLFAIIVMA). Residues 304–312 (SQKFDVDKR) are Extracellular-facing. Residues 313–333 (VAIYAICVALSMIPSSLVVVL) traverse the membrane as a helical segment. Residues 334–815 (TITMSVGAAV…RRMTDNIQKF (482 aa)) are Cytoplasmic-facing. The active-site 4-aspartylphosphate intermediate is the D369. Mg(2+) is bound by residues D369 and T371. ATP-binding residues include T371 and E483. Residues 499-525 (ALTGEKSTNQSNENDQSSLSQHNEKPG) form a disordered region. A compositionally biased stretch (polar residues) spans 503 to 519 (EKSTNQSNENDQSSLSQ). ATP-binding residues include K561, R606, T673, G674, D675, R732, and K738. D757 is a Mg(2+) binding site. N760 is a binding site for ATP. The helical transmembrane segment at 816 to 836 (VLQLLAENVAQALYLIIGLVF) threads the bilayer. Residues 837–848 (RDENGKSVFPLS) are Extracellular-facing. Residues 849-869 (PVEVLWIIVVTSCFPAMGLGL) traverse the membrane as a helical segment. Over 870–885 (EKAAPDLMDRPPHDSE) the chain is Cytoplasmic. Residues 886–906 (VGIFTWEVIIDTFAYGIIMTG) form a helical membrane-spanning segment. The Extracellular portion of the chain corresponds to 907–943 (SCMASFTGSLYGINSGRLGHDCDGTYNSSCRDVYRSR). The helical transmembrane segment at 944-964 (SAAFATMTWCALILAWEVVDM) threads the bilayer. Residues 965–991 (RRSFFRMHPDTDSPVKEFFRSIWGNQF) are Cytoplasmic-facing. Residues 992-1012 (LFWSIIFGFVSAFPVVYIPVI) form a helical membrane-spanning segment. The Extracellular segment spans residues 1013 to 1021 (NDKVFLHKP). The chain crosses the membrane as a helical span at residues 1022-1042 (IGAEWGLAIAFTIAFWIGAEL). The Cytoplasmic segment spans residues 1043-1091 (YKCGKRRYFKTQRAHNPENDLESNNKRDPFEAYSTSTTIHTEVNIGIKQ).

Belongs to the cation transport ATPase (P-type) (TC 3.A.3) family. Type IID subfamily. The cofactor is Mg(2+). The active site is phosphorylated in presence of sodium or potassium and in conditions of higher pH. Not phosphorylated in presence of calcium ions.

The protein resides in the cell membrane. It catalyses the reaction Na(+)(in) + ATP + H2O = Na(+)(out) + ADP + phosphate + H(+). It carries out the reaction K(+)(in) + ATP + H2O = K(+)(out) + ADP + phosphate + H(+). In terms of biological role, catalyzes the hydrolysis of ATP coupled with the export of sodium and potassium from the cell. May export potassium less efficiently. May transport other cations such as lithium. Sodium/potassium efflux ATPases are involved in salt tolerance and maintaining the membrane potential across the plasma membrane in high salinity (Na+) or alkaline (K+) environments. Is negatively modulated by SIS2/HAL3. The sequence is that of Sodium/potassium exporting P-type ATPase 1 from Saccharomyces cerevisiae (strain ATCC 204508 / S288c) (Baker's yeast).